A 389-amino-acid chain; its full sequence is Homoserine O-acetyltransferase (389 aa).

The 309-residue stretch at 63–371 (NAVLVLHALT…SSDYGHDGFL (309 aa)) folds into the AB hydrolase-1 domain. The Nucleophile role is filled by Ser168. Arg240 lines the substrate pocket. Active-site residues include Asp334 and His367. Residue Asp368 coordinates substrate.

It belongs to the AB hydrolase superfamily. MetX family. In terms of assembly, homodimer.

Its subcellular location is the cytoplasm. The enzyme catalyses L-homoserine + acetyl-CoA = O-acetyl-L-homoserine + CoA. The protein operates within amino-acid biosynthesis; L-methionine biosynthesis via de novo pathway; O-acetyl-L-homoserine from L-homoserine: step 1/1. Functionally, transfers an acetyl group from acetyl-CoA to L-homoserine, forming acetyl-L-homoserine. This chain is Homoserine O-acetyltransferase, found in Clavibacter michiganensis subsp. michiganensis (strain NCPPB 382).